Consider the following 442-residue polypeptide: NALCN channel auxiliary factor 2 (442 aa).

A helical membrane pass occupies residues 42–62 (LASLLFFTVLLSNHLWLVSAG). N-linked (GlcNAc...) asparagine glycans are attached at residues Asn-77, Asn-100, Asn-171, Asn-279, and Asn-354. Residues 406–426 (CVLVLMLLHTMASFSVVQNGV) form a helical membrane-spanning segment.

Belongs to the NALF family.

It localises to the membrane. Probable component of the NALCN channel complex, a channel that regulates the resting membrane potential and controls neuronal excitability. This chain is NALCN channel auxiliary factor 2 (nalf2), found in Xenopus tropicalis (Western clawed frog).